We begin with the raw amino-acid sequence, 61 residues long: uncharacterized protein (61 aa).

This is an uncharacterized protein from Rickettsia conorii (strain ATCC VR-613 / Malish 7).